A 251-amino-acid polypeptide reads, in one-letter code: CDP-diacylglycerol pyrophosphatase (251 aa).

A helical membrane pass occupies residues 5-25 (GYFLLAVIVIVAAAGVGYWKF).

Belongs to the Cdh family.

It is found in the cell inner membrane. It catalyses the reaction a CDP-1,2-diacyl-sn-glycerol + H2O = a 1,2-diacyl-sn-glycero-3-phosphate + CMP + 2 H(+). It participates in phospholipid metabolism; CDP-diacylglycerol degradation; phosphatidate from CDP-diacylglycerol: step 1/1. The chain is CDP-diacylglycerol pyrophosphatase from Salmonella paratyphi A (strain ATCC 9150 / SARB42).